The primary structure comprises 380 residues: O-phospho-L-seryl-tRNA:Cys-tRNA synthase (380 aa).

Pyridoxal 5'-phosphate contacts are provided by residues 86 to 87 (AR), Asn192, and 215 to 217 (SGH). The residue at position 218 (Lys218) is an N6-(pyridoxal phosphate)lysine.

It belongs to the SepCysS family. In terms of assembly, homodimer. Interacts with SepRS. The cofactor is pyridoxal 5'-phosphate.

The enzyme catalyses O-phospho-L-seryl-tRNA(Cys) + hydrogen sulfide + H(+) = L-cysteinyl-tRNA(Cys) + phosphate. In terms of biological role, converts O-phospho-L-seryl-tRNA(Cys) (Sep-tRNA(Cys)) to L-cysteinyl-tRNA(Cys) (Cys-tRNA(Cys)). The chain is O-phospho-L-seryl-tRNA:Cys-tRNA synthase from Methanococcus maripaludis (strain C7 / ATCC BAA-1331).